Consider the following 347-residue polypeptide: Tetraacyldisaccharide 4'-kinase (347 aa).

ATP is bound at residue 54–61; that stretch reads TVGGAGKT.

The protein belongs to the LpxK family.

The enzyme catalyses a lipid A disaccharide + ATP = a lipid IVA + ADP + H(+). It functions in the pathway glycolipid biosynthesis; lipid IV(A) biosynthesis; lipid IV(A) from (3R)-3-hydroxytetradecanoyl-[acyl-carrier-protein] and UDP-N-acetyl-alpha-D-glucosamine: step 6/6. Transfers the gamma-phosphate of ATP to the 4'-position of a tetraacyldisaccharide 1-phosphate intermediate (termed DS-1-P) to form tetraacyldisaccharide 1,4'-bis-phosphate (lipid IVA). In Rhizobium etli (strain CIAT 652), this protein is Tetraacyldisaccharide 4'-kinase.